The primary structure comprises 200 residues: NADH-quinone oxidoreductase subunit C (200 aa).

The protein belongs to the complex I 30 kDa subunit family. As to quaternary structure, NDH-1 is composed of 14 different subunits. Subunits NuoB, C, D, E, F, and G constitute the peripheral sector of the complex.

The protein localises to the cell inner membrane. It carries out the reaction a quinone + NADH + 5 H(+)(in) = a quinol + NAD(+) + 4 H(+)(out). Its function is as follows. NDH-1 shuttles electrons from NADH, via FMN and iron-sulfur (Fe-S) centers, to quinones in the respiratory chain. The immediate electron acceptor for the enzyme in this species is believed to be ubiquinone. Couples the redox reaction to proton translocation (for every two electrons transferred, four hydrogen ions are translocated across the cytoplasmic membrane), and thus conserves the redox energy in a proton gradient. In Rhizobium rhizogenes (strain K84 / ATCC BAA-868) (Agrobacterium radiobacter), this protein is NADH-quinone oxidoreductase subunit C.